The sequence spans 380 residues: Histidinol-phosphate aminotransferase (380 aa).

At Lys235 the chain carries N6-(pyridoxal phosphate)lysine.

It belongs to the class-II pyridoxal-phosphate-dependent aminotransferase family. Histidinol-phosphate aminotransferase subfamily. As to quaternary structure, homodimer. Pyridoxal 5'-phosphate serves as cofactor.

It carries out the reaction L-histidinol phosphate + 2-oxoglutarate = 3-(imidazol-4-yl)-2-oxopropyl phosphate + L-glutamate. The protein operates within amino-acid biosynthesis; L-histidine biosynthesis; L-histidine from 5-phospho-alpha-D-ribose 1-diphosphate: step 7/9. This Rhodococcus opacus (strain B4) protein is Histidinol-phosphate aminotransferase.